A 171-amino-acid chain; its full sequence is Dual-action ribosomal maturation protein DarP (171 aa).

The segment at 1–30 (MPKRPAENPEQSDDFVSKSQKKREMAERQE) is disordered.

It belongs to the DarP family.

The protein localises to the cytoplasm. Member of a network of 50S ribosomal subunit biogenesis factors which assembles along the 30S-50S interface, preventing incorrect 23S rRNA structures from forming. Promotes peptidyl transferase center (PTC) maturation. In Idiomarina loihiensis (strain ATCC BAA-735 / DSM 15497 / L2-TR), this protein is Dual-action ribosomal maturation protein DarP.